A 143-amino-acid chain; its full sequence is Glutamyl-tRNA(Gln) amidotransferase subunit C, chloroplastic/mitochondrial (143 aa).

This sequence belongs to the GatC family. As to quaternary structure, subunit of the heterotrimeric GatCAB amidotransferase (AdT) complex, composed of A, B and C subunits.

It localises to the mitochondrion. Its subcellular location is the plastid. It is found in the chloroplast. The enzyme catalyses L-glutamyl-tRNA(Gln) + L-glutamine + ATP + H2O = L-glutaminyl-tRNA(Gln) + L-glutamate + ADP + phosphate + H(+). Allows the formation of correctly charged Gln-tRNA(Gln) through the transamidation of misacylated Glu-tRNA(Gln) in chloroplasts and mitochondria. The reaction takes place in the presence of glutamine and ATP through an activated gamma-phospho-Glu-tRNA(Gln). The polypeptide is Glutamyl-tRNA(Gln) amidotransferase subunit C, chloroplastic/mitochondrial (Ricinus communis (Castor bean)).